The following is a 273-amino-acid chain: NAD-dependent protein deacylase (273 aa).

The Deacetylase sirtuin-type domain occupies 20 to 272; it reads RERLRQRIFF…PEFVEKLLEG (253 aa). 48-67 is a binding site for NAD(+); it reads GAGISAESGIRTFRAADGLW. Residues tyrosine 92 and arginine 95 each contribute to the substrate site. 129-132 contacts NAD(+); the sequence is QNID. Histidine 147 functions as the Proton acceptor in the catalytic mechanism. Residues cysteine 155 and cysteine 174 each contribute to the Zn(2+) site. Residues 214 to 216, 240 to 242, and alanine 258 each bind NAD(+); these read GTS and NLE.

Belongs to the sirtuin family. Class III subfamily. Requires Zn(2+) as cofactor.

It localises to the cytoplasm. It catalyses the reaction N(6)-acetyl-L-lysyl-[protein] + NAD(+) + H2O = 2''-O-acetyl-ADP-D-ribose + nicotinamide + L-lysyl-[protein]. It carries out the reaction N(6)-succinyl-L-lysyl-[protein] + NAD(+) + H2O = 2''-O-succinyl-ADP-D-ribose + nicotinamide + L-lysyl-[protein]. The enzyme catalyses N(6)-(2-hydroxyisobutanoyl)-L-lysyl-[protein] + NAD(+) + H2O = 2''-O-(2-hydroxyisobutanoyl)-ADP-D-ribose + nicotinamide + L-lysyl-[protein]. Its function is as follows. NAD-dependent lysine deacetylase that specifically removes acetyl groups on target proteins. Also acts as a protein-lysine deacylase by mediating protein desuccinylation and de-2-hydroxyisobutyrylation. Modulates the activities of several proteins which are inactive in their acylated form. This chain is NAD-dependent protein deacylase, found in Shigella flexneri.